Here is a 493-residue protein sequence, read N- to C-terminus: Probable vesicular acetylcholine transporter-B (493 aa).

Residues 1–39 (MQSTGAPGLAQSAVLQLSAMGERSRELGGALREPERKRR) lie on the Cytoplasmic side of the membrane. The chain crosses the membrane as a helical span at residues 40–60 (LLLVVVCVALLLDNMLYMVIV). Over 61–86 (PIIPDYLADLRGERGNSSADLDIQIG) the chain is Lumenal, vesicle. N-linked (GlcNAc...) asparagine glycosylation is present at Asn-76. A helical membrane pass occupies residues 87–107 (VLFASKALLQLLVNPLSGTFI). At 108 to 113 (DRVGYD) the chain is on the cytoplasmic side. Residues 114–134 (LPLLIGLLVMFLSTCIFAFAE) form a helical membrane-spanning segment. Topologically, residues 135–143 (NYGTLFAAR) are lumenal, vesicle. A helical transmembrane segment spans residues 144–164 (SLQGLGSAFADTSGIAMIADK). At 165-174 (FTEEAERSRA) the chain is on the cytoplasmic side. A helical transmembrane segment spans residues 175–195 (LGIALAFISFGSLVAPPFGGI). The Lumenal, vesicle portion of the chain corresponds to 196–203 (LYEFAGKR). The helical transmembrane segment at 204 to 224 (VPFIVLACVCLADGVLLLTVV) threads the bilayer. Topologically, residues 225-247 (KPFSDRTRENMPVGTPIHRLMVD) are cytoplasmic. A helical transmembrane segment spans residues 248–268 (PYIAVVAGALTVCNIPLAFLE). Topologically, residues 269 to 284 (PTIANWMESTMDASKW) are lumenal, vesicle. The chain crosses the membrane as a helical span at residues 285-305 (QMGLVWLPAFLPHVLGVYITV). The Cytoplasmic segment spans residues 306 to 315 (RLAARYPERQ). A helical membrane pass occupies residues 316 to 336 (WFYGALGMVIIGASSCTVPAC). At 337–347 (KTFGELVFPLC) the chain is on the lumenal, vesicle side. Residues 348–368 (GICFGIALVDTALLPTLAFLV) traverse the membrane as a helical segment. Residues 369-378 (DVRHVSVYGS) lie on the Cytoplasmic side of the membrane. Residues 379–399 (VYAIADISYSVAYAMGPVVAG) traverse the membrane as a helical segment. At 400–406 (QIVHNLG) the chain is on the lumenal, vesicle side. Residues 407-427 (FVQLNLGMGLVNVLYAPALLL) form a helical membrane-spanning segment. Over 428–493 (LRPVCQIKPS…EEEESGPESA (66 aa)) the chain is Cytoplasmic. Residues 467–493 (GLSAGAGTEHGLRGRSEEEEESGPESA) are disordered. Residues 483-493 (EEEEESGPESA) are compositionally biased toward acidic residues.

Belongs to the major facilitator superfamily. Vesicular transporter family.

The protein resides in the membrane. In terms of biological role, involved in acetylcholine transport into synaptic vesicles. The chain is Probable vesicular acetylcholine transporter-B (slc18a3b) from Danio rerio (Zebrafish).